An 891-amino-acid chain; its full sequence is Protein SEY1 homolog (891 aa).

Residues 1-754 lie on the Cytoplasmic side of the membrane; that stretch reads MNLHLVDSDG…LRAAEAGNQR (754 aa). The GB1/RHD3-type G domain occupies 52 to 318; the sequence is GLNYHVVGVF…RCSDYLFSYH (267 aa). GTP is bound at residue 62–69; it reads GGQSSGKS. Residues 755–775 form a helical membrane-spanning segment; the sequence is LPAWVIPALFILGWNELLYVL. At 776 to 778 the chain is on the lumenal side; the sequence is TSP. Residues 779 to 799 form a helical membrane-spanning segment; it reads ALLVLVVVICAVFFRQFFVSQ. The Cytoplasmic portion of the chain corresponds to 800–891; it reads WHAFEETGPA…MRHRTTHKLD (92 aa). Positions 863-880 are enriched in polar residues; that stretch reads STHADPAPSNTTVPTAQA. Positions 863-891 are disordered; the sequence is STHADPAPSNTTVPTAQATMRHRTTHKLD. The span at 882 to 891 shows a compositional bias: basic residues; that stretch reads MRHRTTHKLD.

The protein belongs to the TRAFAC class dynamin-like GTPase superfamily. GB1/RHD3 GTPase family. RHD3 subfamily.

It localises to the endoplasmic reticulum membrane. Its function is as follows. Probable GTP-binding protein that may be involved in cell development. This is Protein SEY1 homolog from Leishmania braziliensis.